A 258-amino-acid chain; its full sequence is Flagellar L-ring protein (258 aa).

The N-terminal stretch at 1 to 15 (MKRIVCLALFLSMTG) is a signal peptide. The N-palmitoyl cysteine moiety is linked to residue C16. C16 is lipidated: S-diacylglycerol cysteine.

This sequence belongs to the FlgH family. As to quaternary structure, the basal body constitutes a major portion of the flagellar organelle and consists of four rings (L,P,S, and M) mounted on a central rod.

Its subcellular location is the cell outer membrane. The protein localises to the bacterial flagellum basal body. In terms of biological role, assembles around the rod to form the L-ring and probably protects the motor/basal body from shearing forces during rotation. This Vibrio atlanticus (strain LGP32) (Vibrio splendidus (strain Mel32)) protein is Flagellar L-ring protein.